The following is a 575-amino-acid chain: Putative diflavin flavoprotein A 4 (575 aa).

The zinc metallo-hydrolase stretch occupies residues 41-234 (QRGTTANSYL…LGARSYAPGH (194 aa)). Positions 263-405 (VALLYTSAYG…AGATFAQTLK (143 aa)) constitute a Flavodoxin-like domain. The tract at residues 429 to 575 (VGRIIGSLCV…AVEHRKSGSH (147 aa)) is flavodoxin-reductase-like.

This sequence in the N-terminal section; belongs to the zinc metallo-hydrolase group 3 family. It in the C-terminal section; belongs to the flavodoxin reductase family. Fe cation serves as cofactor.

Functionally, mediates electron transfer from NADH to oxygen, reducing it to water. This modular protein has 3 redox cofactors, in other organisms the same activity requires 2 or 3 proteins. The protein is Putative diflavin flavoprotein A 4 (dfa4) of Nostoc sp. (strain PCC 7120 / SAG 25.82 / UTEX 2576).